Consider the following 481-residue polypeptide: Glycosyl hydrolase family 109 protein 1 (481 aa).

Positions 1-29 (MDNSSSRRRFLQTLGLATGALAAGSFANA) form a signal peptide, tat-type signal. NAD(+) is bound by residues 84-85 (ER), Asp-106, 155-158 (WEWH), 175-176 (EV), and Asn-204. Residues Tyr-233, Arg-252, 264-267 (YPTH), and Tyr-347 each bind substrate. Tyr-264 contributes to the NAD(+) binding site.

The protein belongs to the Gfo/Idh/MocA family. Glycosyl hydrolase 109 subfamily. NAD(+) is required as a cofactor. Predicted to be exported by the Tat system. The position of the signal peptide cleavage has not been experimentally proven.

Its function is as follows. Glycosidase. The chain is Glycosyl hydrolase family 109 protein 1 from Akkermansia muciniphila (strain ATCC BAA-835 / DSM 22959 / JCM 33894 / BCRC 81048 / CCUG 64013 / CIP 107961 / Muc).